The following is a 247-amino-acid chain: 2,5-diamino-6-ribosylamino-4(3H)-pyrimidinone 5'-phosphate reductase (247 aa).

Residues T75, D79, G165, and 187-191 each bind NADP(+); that span reads GASII.

The protein belongs to the HTP reductase family. Homodimer.

It catalyses the reaction 2,5-diamino-6-(1-D-ribitylamino)pyrimidin-4(3H)-one 5'-phosphate + NADP(+) = 2,5-diamino-6-(1-D-ribosylamino)pyrimidin-4(3H)-one 5'-phosphate + NADPH + H(+). It carries out the reaction 2,5-diamino-6-(1-D-ribitylamino)pyrimidin-4(3H)-one 5'-phosphate + NAD(+) = 2,5-diamino-6-(1-D-ribosylamino)pyrimidin-4(3H)-one 5'-phosphate + NADH + H(+). It participates in cofactor biosynthesis; riboflavin biosynthesis. Its function is as follows. Catalyzes an early step in riboflavin biosynthesis, the NADPH-dependent reduction of the ribose side chain of 2,5-diamino-6-ribosylamino-4(3H)-pyrimidinone 5'-phosphate, yielding 2,5-diamino-6-ribitylamino-4(3H)-pyrimidinone 5'-phosphate. The chain is 2,5-diamino-6-ribosylamino-4(3H)-pyrimidinone 5'-phosphate reductase (RIB7) from Debaryomyces hansenii (strain ATCC 36239 / CBS 767 / BCRC 21394 / JCM 1990 / NBRC 0083 / IGC 2968) (Yeast).